The primary structure comprises 264 residues: ATP synthase subunit a (264 aa).

7 helical membrane-spanning segments follow: residues 29–49 (TWHIDSLLFSVGLGVLFLWIF), 90–110 (IAPLALTIFVWVFMMNFMDMI), 111–131 (PVDWLPSLALLAGVEYLKVVP), 134–154 (DVNITFSLAIGVFVLIIYYSI), 177–197 (IPVNLLLESVTLIAKPISLAL), 208–228 (LIFILIALMYSANWAMATLGV), and 235–255 (LIFHILVITLQAFIFMMLTIV).

The protein belongs to the ATPase A chain family. F-type ATPases have 2 components, CF(1) - the catalytic core - and CF(0) - the membrane proton channel. CF(1) has five subunits: alpha(3), beta(3), gamma(1), delta(1), epsilon(1). CF(0) has three main subunits: a(1), b(2) and c(9-12). The alpha and beta chains form an alternating ring which encloses part of the gamma chain. CF(1) is attached to CF(0) by a central stalk formed by the gamma and epsilon chains, while a peripheral stalk is formed by the delta and b chains.

The protein resides in the cell inner membrane. Its function is as follows. Key component of the proton channel; it plays a direct role in the translocation of protons across the membrane. This chain is ATP synthase subunit a, found in Shewanella denitrificans (strain OS217 / ATCC BAA-1090 / DSM 15013).